The chain runs to 495 residues: Cytochrome P450 2E1 (495 aa).

298–303 (FAGTET) provides a ligand contact to substrate. Heme is bound at residue cysteine 437.

This sequence belongs to the cytochrome P450 family. As to quaternary structure, interacts with chaperones HSP70 and HSP90; this interaction is required for initial targeting to mitochondria. The cofactor is heme.

The protein localises to the endoplasmic reticulum membrane. It localises to the microsome membrane. It is found in the mitochondrion inner membrane. The catalysed reaction is an organic molecule + reduced [NADPH--hemoprotein reductase] + O2 = an alcohol + oxidized [NADPH--hemoprotein reductase] + H2O + H(+). The enzyme catalyses (5Z,8Z,11Z)-eicosatrienoate + reduced [NADPH--hemoprotein reductase] + O2 = 19-hydroxy-(5Z,8Z,11Z)-eicosatrienoate + oxidized [NADPH--hemoprotein reductase] + H2O + H(+). It carries out the reaction (5Z,8Z,11Z,14Z,17Z)-eicosapentaenoate + reduced [NADPH--hemoprotein reductase] + O2 = 19-hydroxy-(5Z,8Z,11Z,14Z,17Z)-eicosapentaenoate + oxidized [NADPH--hemoprotein reductase] + H2O + H(+). It catalyses the reaction (4Z,7Z,10Z,13Z,16Z,19Z)-docosahexaenoate + reduced [NADPH--hemoprotein reductase] + O2 = 21-hydroxy-(4Z,7Z,10Z,13Z,16Z,19Z)-docosahexaenoate + oxidized [NADPH--hemoprotein reductase] + H2O + H(+). The catalysed reaction is dodecanoate + reduced [NADPH--hemoprotein reductase] + O2 = 11-hydroxydodecanoate + oxidized [NADPH--hemoprotein reductase] + H2O + H(+). The enzyme catalyses tetradecanoate + reduced [NADPH--hemoprotein reductase] + O2 = 13-hydroxytetradecanoate + oxidized [NADPH--hemoprotein reductase] + H2O + H(+). It carries out the reaction 4-nitrophenol + NADPH + O2 + H(+) = 4-nitrocatechol + NADP(+) + H2O. It participates in lipid metabolism; fatty acid metabolism. Its activity is regulated as follows. The omega-1 hydroxylase activity is stimulated by cytochrome b5. A cytochrome P450 monooxygenase involved in the metabolism of fatty acids. Mechanistically, uses molecular oxygen inserting one oxygen atom into a substrate, and reducing the second into a water molecule, with two electrons provided by NADPH via cytochrome P450 reductase (NADPH--hemoprotein reductase). Catalyzes the hydroxylation of carbon-hydrogen bonds. Hydroxylates fatty acids specifically at the omega-1 position displaying the highest catalytic activity for saturated fatty acids. May be involved in the oxidative metabolism of xenobiotics. The polypeptide is Cytochrome P450 2E1 (CYP2E1) (Sus scrofa (Pig)).